A 386-amino-acid polypeptide reads, in one-letter code: S-adenosylmethionine synthase (386 aa).

Residue H17 participates in ATP binding. Position 19 (D19) interacts with Mg(2+). E45 is a binding site for K(+). L-methionine is bound by residues E58 and Q101. The flexible loop stretch occupies residues 101-111; it reads QSPDISQGVTE. Residues 168-170, D242, 248-249, A265, and K269 each bind ATP; these read DAK and RK. D242 provides a ligand contact to L-methionine. Residue K273 participates in L-methionine binding.

This sequence belongs to the AdoMet synthase family. As to quaternary structure, homotetramer; dimer of dimers. The cofactor is Mg(2+). Requires K(+) as cofactor.

It localises to the cytoplasm. It catalyses the reaction L-methionine + ATP + H2O = S-adenosyl-L-methionine + phosphate + diphosphate. It participates in amino-acid biosynthesis; S-adenosyl-L-methionine biosynthesis; S-adenosyl-L-methionine from L-methionine: step 1/1. Functionally, catalyzes the formation of S-adenosylmethionine (AdoMet) from methionine and ATP. The overall synthetic reaction is composed of two sequential steps, AdoMet formation and the subsequent tripolyphosphate hydrolysis which occurs prior to release of AdoMet from the enzyme. This Leptospira borgpetersenii serovar Hardjo-bovis (strain JB197) protein is S-adenosylmethionine synthase.